The following is a 156-amino-acid chain: Ribonuclease pancreatic (156 aa).

The first 28 residues, 1–28 (MALEKSLALLPLLVLVLLVLGWVQPSLG), serve as a signal peptide directing secretion. 2 residues coordinate substrate: K35 and R38. The active-site Proton acceptor is H40. 4 cysteine pairs are disulfide-bonded: C54–C112, C68–C123, C86–C138, and C93–C100. Residue N62 is glycosylated (N-linked (GlcNAc...) asparagine). 69 to 73 (KPVNT) provides a ligand contact to substrate. N90 carries N-linked (GlcNAc...) asparagine glycosylation. Residues K94 and R113 each contribute to the substrate site. H147 acts as the Proton donor in catalysis.

Belongs to the pancreatic ribonuclease family. In terms of assembly, monomer. Interacts with and forms tight 1:1 complexes with RNH1. Dimerization of two such complexes may occur. Interaction with RNH1 inhibits this protein.

The protein resides in the secreted. It carries out the reaction an [RNA] containing cytidine + H2O = an [RNA]-3'-cytidine-3'-phosphate + a 5'-hydroxy-ribonucleotide-3'-[RNA].. The enzyme catalyses an [RNA] containing uridine + H2O = an [RNA]-3'-uridine-3'-phosphate + a 5'-hydroxy-ribonucleotide-3'-[RNA].. In terms of biological role, endonuclease that catalyzes the cleavage of RNA on the 3' side of pyrimidine nucleotides. Acts on single-stranded and double-stranded RNA. The sequence is that of Ribonuclease pancreatic (RNASE1) from Lagothrix lagotricha (Brown woolly monkey).